We begin with the raw amino-acid sequence, 376 residues long: tRNA-specific 2-thiouridylase MnmA (376 aa).

ATP contacts are provided by residues 19 to 26 (GMSGGVDS) and M45. The interval 105–107 (NPD) is interaction with target base in tRNA. C110 acts as the Nucleophile in catalysis. A disulfide bond links C110 and C210. ATP is bound at residue G134. Residues 160–162 (KDQ) form an interaction with tRNA region. C210 (cysteine persulfide intermediate) is an active-site residue. The interaction with tRNA stretch occupies residues 326 to 327 (RY).

This sequence belongs to the MnmA/TRMU family.

Its subcellular location is the cytoplasm. It catalyses the reaction S-sulfanyl-L-cysteinyl-[protein] + uridine(34) in tRNA + AH2 + ATP = 2-thiouridine(34) in tRNA + L-cysteinyl-[protein] + A + AMP + diphosphate + H(+). In terms of biological role, catalyzes the 2-thiolation of uridine at the wobble position (U34) of tRNA, leading to the formation of s(2)U34. The protein is tRNA-specific 2-thiouridylase MnmA of Bordetella petrii (strain ATCC BAA-461 / DSM 12804 / CCUG 43448).